The primary structure comprises 72 residues: Large ribosomal subunit protein bL31 (72 aa).

Belongs to the bacterial ribosomal protein bL31 family. Type A subfamily. Part of the 50S ribosomal subunit.

In terms of biological role, binds the 23S rRNA. This is Large ribosomal subunit protein bL31 from Deinococcus geothermalis (strain DSM 11300 / CIP 105573 / AG-3a).